The following is an 849-amino-acid chain: Rho guanine nucleotide exchange factor 15 (849 aa).

Disordered regions lie at residues 1–146 (MSAQ…ASAP), 159–202 (GAEG…NGTP), and 277–308 (LPPL…LPSE). Positions 18–31 (RIIRPRPPSRHRAP) are enriched in basic residues. A compositionally biased stretch (polar residues) spans 48–59 (QISNDASASVCT). Over residues 65–110 (PPTASLKPPALLPPSVSRTSLDSQTSPDSPSSTPSPSPVSRRSISP) the composition is skewed to low complexity. Ser-107 and Ser-109 each carry phosphoserine. A compositionally biased stretch (pro residues) spans 111–123 (EPAPCSPVPPPKP). Polar residues predominate over residues 164–180 (AQSSDSLERCSQGSTEV). Residue Tyr-361 is modified to Phosphotyrosine; by EPHB2. In terms of domain architecture, DH spans 425-609 (RMQESLFEVV…SKIIERCSAE (185 aa)). 2 stretches are compositionally biased toward polar residues: residues 771–786 (CSEP…QSLE) and 840–849 (SSGTPDTPQP). 2 disordered regions span residues 771-803 (CSEP…GWLK) and 819-849 (GEHE…TPQP).

As to quaternary structure, interacts with EPHA4. Interacts with EPHB2. Post-translationally, phosphorylated on tyrosine residues upon EFNA1 stimulation. EPHB2-dependent phosphorylation at Tyr-361 triggers UBE3A-mediated ubiquitination. Ubiquitinated; UBE3A-mediated ubiquitination and degradation by the proteasome promotes EFNB1-dependent synapse formation. In terms of tissue distribution, at P12, expressed is detected in the CA1 region and the dentate gyrus of the hippocampus.

The protein resides in the cell projection. It localises to the dendrite. Its function is as follows. Specific GEF for RhoA activation. Does not activate RAC1 or CDC42. Regulates vascular smooth muscle contractility. Negatively regulates excitatory synapse development by suppressing the synapse-promoting activity of EPHB2. This chain is Rho guanine nucleotide exchange factor 15 (Arhgef15), found in Mus musculus (Mouse).